The sequence spans 497 residues: Glucose-6-phosphate 1-dehydrogenase (497 aa).

NADP(+) is bound by residues 17–24, arginine 51, and lysine 151; that span reads GASGDLAK. D-glucose 6-phosphate contacts are provided by residues lysine 151, 181 to 185, glutamate 219, and aspartate 238; that span reads HYLGK. Histidine 243 (proton acceptor) is an active-site residue. Residue lysine 334 coordinates NADP(+). D-glucose 6-phosphate is bound by residues lysine 337 and arginine 342. The NADP(+) site is built by lysine 343, arginine 347, and arginine 371. Glutamine 373 lines the D-glucose 6-phosphate pocket. NADP(+) contacts are provided by residues 379-381, 399-401, arginine 465, and tryptophan 487; these read YLK and DLS.

The protein belongs to the glucose-6-phosphate dehydrogenase family.

It is found in the cytoplasm. It localises to the cytosol. The enzyme catalyses D-glucose 6-phosphate + NADP(+) = 6-phospho-D-glucono-1,5-lactone + NADPH + H(+). Its pathway is carbohydrate degradation; pentose phosphate pathway; D-ribulose 5-phosphate from D-glucose 6-phosphate (oxidative stage): step 1/3. Cytosolic glucose-6-phosphate dehydrogenase that catalyzes the first and rate-limiting step of the oxidative branch within the pentose phosphate pathway/shunt, an alternative route to glycolysis for the dissimilation of carbohydrates and a major source of reducing power and metabolic intermediates for fatty acid and nucleic acid biosynthetic processes. This Dictyostelium discoideum (Social amoeba) protein is Glucose-6-phosphate 1-dehydrogenase (g6pd-1).